A 365-amino-acid chain; its full sequence is uncharacterized protein (365 aa).

2 disordered regions span residues 218-262 and 315-342; these read QRPS…AEAA and PRLP…RTPC. Basic and acidic residues-rich tracts occupy residues 239-257 and 331-341; these read PDNR…KDPE and MEFRNLSDRTP.

This is an uncharacterized protein from Mus musculus (Mouse).